We begin with the raw amino-acid sequence, 209 residues long: Large ribosomal subunit protein uL3 (209 aa).

The disordered stretch occupies residues 133-152 (THGNSLSHRVPGSIGQNQTP). Residue Gln-150 is modified to N5-methylglutamine.

Belongs to the universal ribosomal protein uL3 family. In terms of assembly, part of the 50S ribosomal subunit. Forms a cluster with proteins L14 and L19. Post-translationally, methylated by PrmB.

One of the primary rRNA binding proteins, it binds directly near the 3'-end of the 23S rRNA, where it nucleates assembly of the 50S subunit. This chain is Large ribosomal subunit protein uL3, found in Yersinia pseudotuberculosis serotype O:1b (strain IP 31758).